A 330-amino-acid polypeptide reads, in one-letter code: Ketol-acid reductoisomerase (NADP(+)) (330 aa).

One can recognise a KARI N-terminal Rossmann domain in the interval 2-181 (MEKYHETDAD…GATRAVVLET (180 aa)). NADP(+)-binding positions include 25–28 (YGSQ), R48, S52, and 82–85 (DENQ). The active site involves H107. G133 contacts NADP(+). The region spanning 182–327 (TFREETETDL…SELRAMMPQF (146 aa)) is the KARI C-terminal knotted domain. Mg(2+) contacts are provided by D190, E194, E226, and E230. S251 contacts substrate.

This sequence belongs to the ketol-acid reductoisomerase family. The cofactor is Mg(2+).

The enzyme catalyses (2R)-2,3-dihydroxy-3-methylbutanoate + NADP(+) = (2S)-2-acetolactate + NADPH + H(+). The catalysed reaction is (2R,3R)-2,3-dihydroxy-3-methylpentanoate + NADP(+) = (S)-2-ethyl-2-hydroxy-3-oxobutanoate + NADPH + H(+). Its pathway is amino-acid biosynthesis; L-isoleucine biosynthesis; L-isoleucine from 2-oxobutanoate: step 2/4. The protein operates within amino-acid biosynthesis; L-valine biosynthesis; L-valine from pyruvate: step 2/4. In terms of biological role, involved in the biosynthesis of branched-chain amino acids (BCAA). Catalyzes an alkyl-migration followed by a ketol-acid reduction of (S)-2-acetolactate (S2AL) to yield (R)-2,3-dihydroxy-isovalerate. In the isomerase reaction, S2AL is rearranged via a Mg-dependent methyl migration to produce 3-hydroxy-3-methyl-2-ketobutyrate (HMKB). In the reductase reaction, this 2-ketoacid undergoes a metal-dependent reduction by NADPH to yield (R)-2,3-dihydroxy-isovalerate. The protein is Ketol-acid reductoisomerase (NADP(+)) of Methanocorpusculum labreanum (strain ATCC 43576 / DSM 4855 / Z).